Here is a 1012-residue protein sequence, read N- to C-terminus: Probable inorganic carbon transporter subunit DabA (1012 aa).

Positions 489, 491, 679, and 694 each coordinate Zn(2+).

Belongs to the inorganic carbon transporter (TC 9.A.2) DabA family. In terms of assembly, forms a complex with DabB. Zn(2+) serves as cofactor.

The protein resides in the cell inner membrane. Its function is as follows. Part of an energy-coupled inorganic carbon pump. The polypeptide is Probable inorganic carbon transporter subunit DabA (Dechloromonas aromatica (strain RCB)).